Reading from the N-terminus, the 111-residue chain is Nucleoid-associated protein LBA0378 (111 aa).

The protein belongs to the YbaB/EbfC family. In terms of assembly, homodimer.

It localises to the cytoplasm. The protein localises to the nucleoid. Binds to DNA and alters its conformation. May be involved in regulation of gene expression, nucleoid organization and DNA protection. The polypeptide is Nucleoid-associated protein LBA0378 (Lactobacillus acidophilus (strain ATCC 700396 / NCK56 / N2 / NCFM)).